The following is a 264-amino-acid chain: Cancer/testis antigen 55 (264 aa).

Residues 242–264 form a disordered region; the sequence is SSSGFQDDGGLGRPKRERRSQSI. The segment covering 254 to 264 has biased composition (basic residues); the sequence is RPKRERRSQSI.

In terms of assembly, interacts with GABARAP; this interaction may be important for GABARAP protein stability. Isoform 1 interacts with LAMP2; this interaction may be important for LAMP2 protein stability. Testis-specific. Expressed in spermatozoa (at protein level).

The protein localises to the cytoplasm. The protein resides in the cytoplasmic vesicle. It is found in the secretory vesicle. Its subcellular location is the acrosome. It localises to the cell projection. The protein localises to the cilium. The protein resides in the flagellum. Its function is as follows. Plays a role in spermatogenesis, possibly acting in the regulation of the autophagy pathway. The chain is Cancer/testis antigen 55 (CT55) from Homo sapiens (Human).